A 136-amino-acid chain; its full sequence is Large ribosomal subunit protein uL16c (136 aa).

Belongs to the universal ribosomal protein uL16 family. As to quaternary structure, part of the 50S ribosomal subunit.

Its subcellular location is the plastid. The protein resides in the chloroplast. In Guizotia abyssinica (Niger), this protein is Large ribosomal subunit protein uL16c.